Here is a 361-residue protein sequence, read N- to C-terminus: MFSGFSSFGGGNGFVNMPQTFEEFFRCYPIAMMNDRIRKDDANFGGKIFLPPSALSKLSMLNIRYPMLFKLTANETGRVTHGGVLEFIAEEGRVYLPQWMMETLGIQPGSLLQISSTDVPLGQFVKLEPQSVDFLDISDPKAVLENVLRNFSTLTVDDVIEISYNGKTFKIKILEVKPESSSKSICVIETDLVTDFAPPVGYVEPDYKALKAQQDKEKKNSFGKGQVLDPSVLGQGSMSTRIDYAGIANSSRNKLSKFVGQGQNISGKAPKAEPKQDIKDMKITFDGEPAKLDLPEGQLFFGFPMVLPKEDEESAAGSKSSEQNFQGQGISLRKSNKRKTKSDHDSSKSKAPKSPEVIEID.

Monoubiquitin-binding regions lie at residues 27–28 (CY), 30–32 (IAM), and 99–101 (WMM). Residues 310-361 (EDEESAAGSKSSEQNFQGQGISLRKSNKRKTKSDHDSSKSKAPKSPEVIEID) are disordered. A compositionally biased stretch (polar residues) spans 317 to 329 (GSKSSEQNFQGQG). A Phosphoserine modification is found at serine 354.

The protein belongs to the UFD1 family. In terms of assembly, component of the heterotrimeric CDC48-NPL4-UFD1 ATPase complex. The CDC48-NPL4-UFD1 ATPase complex interacts with the HRD1 ubiquitin ligase complex composed of the E3 ligase HRD1, its cofactors HRD3, USA1 and DER1, substrate recruiting factor YOS9 and CDC48-binding protein UBX2. Interaction between the complexes is mediated by interaction between CDC48-NPL4-UFD1 complex member CDC48 and HRD1 complex member UBX2. Forms a complex composed of CDC48, NPL4, UFD1, DOA1, SHP1 and deubiquitinase OTU1. Interacts with NPL4, CDC48 and UBX2.

Its function is as follows. Functions at a post-ubiquitation step in the ubiquitin fusion degradation (UFD) pathway. Has a role in the endoplasmic reticulum-associated degradation (ERAD) pathway. Required for the proteasome-dependent processing/activation of MGA2 and SPT23 transcription factors leading to the subsequent expression of OLE1. Has an additional role in the turnover of OLE1 where it targets ubiquitinated OLE1 and other proteins to the ERAD. This is Ubiquitin fusion degradation protein 1 (UFD1) from Saccharomyces cerevisiae (strain ATCC 204508 / S288c) (Baker's yeast).